Here is a 376-residue protein sequence, read N- to C-terminus: Alanine racemase (376 aa).

The active-site Proton acceptor; specific for D-alanine is K40. The residue at position 40 (K40) is an N6-(pyridoxal phosphate)lysine. R138 provides a ligand contact to substrate. Y270 acts as the Proton acceptor; specific for L-alanine in catalysis. Residue M317 participates in substrate binding.

The protein belongs to the alanine racemase family. Pyridoxal 5'-phosphate serves as cofactor.

It catalyses the reaction L-alanine = D-alanine. Its pathway is amino-acid biosynthesis; D-alanine biosynthesis; D-alanine from L-alanine: step 1/1. In terms of biological role, catalyzes the interconversion of L-alanine and D-alanine. May also act on other amino acids. This is Alanine racemase (alr) from Lactobacillus gasseri (strain ATCC 33323 / DSM 20243 / BCRC 14619 / CIP 102991 / JCM 1131 / KCTC 3163 / NCIMB 11718 / NCTC 13722 / AM63).